A 132-amino-acid chain; its full sequence is Small ribosomal subunit protein uS12 (132 aa).

Residue Asp89 is modified to 3-methylthioaspartic acid. A disordered region spans residues Asp103–Lys132.

Belongs to the universal ribosomal protein uS12 family. In terms of assembly, part of the 30S ribosomal subunit. Contacts proteins S8 and S17. May interact with IF1 in the 30S initiation complex.

Its function is as follows. With S4 and S5 plays an important role in translational accuracy. Functionally, interacts with and stabilizes bases of the 16S rRNA that are involved in tRNA selection in the A site and with the mRNA backbone. Located at the interface of the 30S and 50S subunits, it traverses the body of the 30S subunit contacting proteins on the other side and probably holding the rRNA structure together. The combined cluster of proteins S8, S12 and S17 appears to hold together the shoulder and platform of the 30S subunit. In Chlorobium phaeovibrioides (strain DSM 265 / 1930) (Prosthecochloris vibrioformis (strain DSM 265)), this protein is Small ribosomal subunit protein uS12.